A 442-amino-acid chain; its full sequence is Ribosomal protein uS12 methylthiotransferase RimO (442 aa).

Residues 8–118 form the MTTase N-terminal domain; sequence PKVGFVSLGC…VLGHVHKYVE (111 aa). Cysteine 17, cysteine 53, cysteine 82, cysteine 150, cysteine 154, and cysteine 157 together coordinate [4Fe-4S] cluster. In terms of domain architecture, Radical SAM core spans 136–373; sequence LTPRHYAYLK…MELQQQVSIR (238 aa). The TRAM domain maps to 376 to 442; it reads ARKVGKEMLV…EYDLWASLID (67 aa).

It belongs to the methylthiotransferase family. RimO subfamily. [4Fe-4S] cluster is required as a cofactor.

It localises to the cytoplasm. It carries out the reaction L-aspartate(89)-[ribosomal protein uS12]-hydrogen + (sulfur carrier)-SH + AH2 + 2 S-adenosyl-L-methionine = 3-methylsulfanyl-L-aspartate(89)-[ribosomal protein uS12]-hydrogen + (sulfur carrier)-H + 5'-deoxyadenosine + L-methionine + A + S-adenosyl-L-homocysteine + 2 H(+). Catalyzes the methylthiolation of an aspartic acid residue of ribosomal protein uS12. This is Ribosomal protein uS12 methylthiotransferase RimO from Aeromonas hydrophila subsp. hydrophila (strain ATCC 7966 / DSM 30187 / BCRC 13018 / CCUG 14551 / JCM 1027 / KCTC 2358 / NCIMB 9240 / NCTC 8049).